The following is a 736-amino-acid chain: Subtilisin-like protease SBT1.9 (736 aa).

The N-terminal stretch at 1–20 is a signal peptide; sequence MGMTVVIILVFSFFVAIVTA. Residues 21–101 constitute a propeptide, activation peptide; the sequence is ETSPYIIHMD…FTKDLPVKLH (81 aa). Positions 25–101 constitute an Inhibitor I9 domain; sequence YIIHMDLSAK…FTKDLPVKLH (77 aa). Residues 103-582 enclose the Peptidase S8 domain; sequence TFSPKFIGLN…AGHVSTNKVL (480 aa). N-linked (GlcNAc...) asparagine glycosylation occurs at Asn112. Asp133 serves as the catalytic Charge relay system. A glycan (N-linked (GlcNAc...) asparagine) is linked at Asn162. His205 (charge relay system) is an active-site residue. N-linked (GlcNAc...) asparagine glycosylation is found at Asn220, Asn381, and Asn453. Residues 367 to 441 enclose the PA domain; it reads VQFPVTYIES…VAFIGSKHRE (75 aa). Ser529 (charge relay system) is an active-site residue. Asn617 carries N-linked (GlcNAc...) asparagine glycosylation.

The protein belongs to the peptidase S8 family.

It localises to the secreted. This chain is Subtilisin-like protease SBT1.9, found in Arabidopsis thaliana (Mouse-ear cress).